The following is a 150-amino-acid chain: Probable FKBP-type 16 kDa peptidyl-prolyl cis-trans isomerase (150 aa).

Positions 14–88 (NTEVTLHFAL…PNPQNVQIIP (75 aa)) constitute a PPIase FKBP-type domain.

This sequence belongs to the FKBP-type PPIase family.

It catalyses the reaction [protein]-peptidylproline (omega=180) = [protein]-peptidylproline (omega=0). Functionally, PPIases accelerate the folding of proteins. The polypeptide is Probable FKBP-type 16 kDa peptidyl-prolyl cis-trans isomerase (yaaD) (Pseudomonas fluorescens).